We begin with the raw amino-acid sequence, 123 residues long: MRSFLVIATLAVGAFGQSYDPCPNDLKNHALCCNAGLENLINFDCHTRKFDSLLPPFQATCARTGSYPKCCTIKIISQGLLCEDPAGVENPDTDTFNPEGDNELENLLDDVGNILNEVLNLLN.

The N-terminal stretch at 1–16 is a signal peptide; sequence MRSFLVIATLAVGAFG. Intrachain disulfides connect Cys22–Cys70, Cys32–Cys61, Cys33–Cys45, and Cys71–Cys82.

It belongs to the cerato-ulmin hydrophobin family. As to quaternary structure, homodimer. Homodimers further self-assemble to form highly ordered films at water-air interfaces through intermolecular interactions.

The protein localises to the secreted. It localises to the cell wall. Aerial growth, conidiation, and dispersal of filamentous fungi in the environment rely upon a capability of their secreting small amphipathic proteins called hydrophobins (HPBs) with low sequence identity. Class I can self-assemble into an outermost layer of rodlet bundles on aerial cell surfaces, conferring cellular hydrophobicity that supports fungal growth, development and dispersal; whereas Class II form highly ordered films at water-air interfaces through intermolecular interactions but contribute nothing to the rodlet structure. Hyd2 is a class II hydrophobin that plays probably a role in intraspecific signaling or hyphal fusion. Not necessary for root adhesion and colonization. Might play an essential role since no deletion mutants could be obtained. This Bionectria ochroleuca (Gliocladium roseum) protein is Class II hydrophobin 2.